A 160-amino-acid polypeptide reads, in one-letter code: S-ribosylhomocysteine lyase (160 aa).

Fe cation-binding residues include histidine 57, histidine 61, and cysteine 127.

Belongs to the LuxS family. In terms of assembly, homodimer. It depends on Fe cation as a cofactor.

The catalysed reaction is S-(5-deoxy-D-ribos-5-yl)-L-homocysteine = (S)-4,5-dihydroxypentane-2,3-dione + L-homocysteine. Its function is as follows. Involved in the synthesis of autoinducer 2 (AI-2) which is secreted by bacteria and is used to communicate both the cell density and the metabolic potential of the environment. The regulation of gene expression in response to changes in cell density is called quorum sensing. Catalyzes the transformation of S-ribosylhomocysteine (RHC) to homocysteine (HC) and 4,5-dihydroxy-2,3-pentadione (DPD). The polypeptide is S-ribosylhomocysteine lyase (Streptococcus gordonii (strain Challis / ATCC 35105 / BCRC 15272 / CH1 / DL1 / V288)).